A 319-amino-acid chain; its full sequence is MKVPLGLWKVSRGNLWSTQKRVLTMSRCLNSDAGNEAKTVREGPAFSADLYMHPEKWKGLPPQRILELYWERMARLGSEYKPNKDELNALLTTSEYSNVPVNDIKKLYHRGEQGAIDIKGGNVNRDNSLRPFMFDELPSQAQELVAQHREQRFYNRLAAYELPLLAQYRQEYKRPSPESHPVTYRYTSYVGEEHPNSRKVVLSVKTKELGLEEKSLHKFRILARSRYDHTTDIFKMSSDKFEHASQNARYLHDILQRLLAESKDLTEDDFSDVPLDTRHTIAKSLRKKKRDYEFPEHWKRPEDAPKKKFDIVDQLLSTL.

The transit peptide at 1–30 (MKVPLGLWKVSRGNLWSTQKRVLTMSRCLN) directs the protein to the mitochondrion.

Belongs to the mitochondrion-specific ribosomal protein mS35 family. In terms of assembly, component of the mitochondrial small ribosomal subunit (mt-SSU). Mature yeast 74S mitochondrial ribosomes consist of a small (37S) and a large (54S) subunit. The 37S small subunit contains a 15S ribosomal RNA (15S mt-rRNA) and 34 different proteins. The 54S large subunit contains a 21S rRNA (21S mt-rRNA) and 46 different proteins.

It localises to the mitochondrion. Component of the mitochondrial ribosome (mitoribosome), a dedicated translation machinery responsible for the synthesis of mitochondrial genome-encoded proteins, including at least some of the essential transmembrane subunits of the mitochondrial respiratory chain. The mitoribosomes are attached to the mitochondrial inner membrane and translation products are cotranslationally integrated into the membrane. In Saccharomyces cerevisiae (strain ATCC 204508 / S288c) (Baker's yeast), this protein is Small ribosomal subunit protein mS35 (RSM24).